We begin with the raw amino-acid sequence, 237 residues long: 4-hydroxy-tetrahydrodipicolinate reductase (237 aa).

NAD(+) is bound by residues 11–16, 92–94, and 116–119; these read GASGRM, GTT, and GSNF. His-148 acts as the Proton donor/acceptor in catalysis. Residue His-149 participates in (S)-2,3,4,5-tetrahydrodipicolinate binding. The active-site Proton donor is the Lys-152. Position 158–159 (158–159) interacts with (S)-2,3,4,5-tetrahydrodipicolinate; the sequence is GS.

It belongs to the DapB family.

It is found in the cytoplasm. The enzyme catalyses (S)-2,3,4,5-tetrahydrodipicolinate + NAD(+) + H2O = (2S,4S)-4-hydroxy-2,3,4,5-tetrahydrodipicolinate + NADH + H(+). It carries out the reaction (S)-2,3,4,5-tetrahydrodipicolinate + NADP(+) + H2O = (2S,4S)-4-hydroxy-2,3,4,5-tetrahydrodipicolinate + NADPH + H(+). It participates in amino-acid biosynthesis; L-lysine biosynthesis via DAP pathway; (S)-tetrahydrodipicolinate from L-aspartate: step 4/4. Catalyzes the conversion of 4-hydroxy-tetrahydrodipicolinate (HTPA) to tetrahydrodipicolinate. The sequence is that of 4-hydroxy-tetrahydrodipicolinate reductase from Xylella fastidiosa (strain 9a5c).